The primary structure comprises 142 residues: Nucleoside diphosphate kinase (142 aa).

The ATP site is built by K11, F59, R87, T93, R104, and N114. H117 (pros-phosphohistidine intermediate) is an active-site residue.

This sequence belongs to the NDK family. In terms of assembly, homotetramer. Requires Mg(2+) as cofactor.

It localises to the cytoplasm. It carries out the reaction a 2'-deoxyribonucleoside 5'-diphosphate + ATP = a 2'-deoxyribonucleoside 5'-triphosphate + ADP. The catalysed reaction is a ribonucleoside 5'-diphosphate + ATP = a ribonucleoside 5'-triphosphate + ADP. In terms of biological role, major role in the synthesis of nucleoside triphosphates other than ATP. The ATP gamma phosphate is transferred to the NDP beta phosphate via a ping-pong mechanism, using a phosphorylated active-site intermediate. The protein is Nucleoside diphosphate kinase of Photobacterium profundum (strain SS9).